A 318-amino-acid chain; its full sequence is Methionyl-tRNA formyltransferase (318 aa).

114–117 provides a ligand contact to (6S)-5,6,7,8-tetrahydrofolate; that stretch reads SVLP.

This sequence belongs to the Fmt family.

The enzyme catalyses L-methionyl-tRNA(fMet) + (6R)-10-formyltetrahydrofolate = N-formyl-L-methionyl-tRNA(fMet) + (6S)-5,6,7,8-tetrahydrofolate + H(+). Attaches a formyl group to the free amino group of methionyl-tRNA(fMet). The formyl group appears to play a dual role in the initiator identity of N-formylmethionyl-tRNA by promoting its recognition by IF2 and preventing the misappropriation of this tRNA by the elongation apparatus. The sequence is that of Methionyl-tRNA formyltransferase from Bdellovibrio bacteriovorus (strain ATCC 15356 / DSM 50701 / NCIMB 9529 / HD100).